We begin with the raw amino-acid sequence, 504 residues long: Zinc finger CCCH-type with G patch domain-containing protein (504 aa).

The segment at 95–121 (LSEDSNEVKPNPDTDEENEEEEQDISG) is disordered. Acidic residues predominate over residues 107 to 118 (DTDEENEEEEQD). The C3H1-type zinc-finger motif lies at 165–191 (KSMKPCGFYLEGKCRFMDNCRYSHGEV). A G-patch domain is found at 308–354 (TRGIGSKLLMKMGYELGKGLGKTLSGRVEPVQAVVLPKGHSLDICAE).

It localises to the nucleus. Functionally, transcription repressor that specifically binds the 5'-GGAG[GA]A[GA]A-3' consensus sequence. Represses transcription by recruiting the chromatin multiprotein complex NuRD to target promoters. Negatively regulates expression of EGFR, a gene involved in cell proliferation, survival and migration. The sequence is that of Zinc finger CCCH-type with G patch domain-containing protein (zgpat) from Danio rerio (Zebrafish).